The sequence spans 409 residues: Cdc42 effector protein 1 (409 aa).

Positions 1-29 (MPGPQGGTGAPTMSLGKLSPVGWVSSSHG) are disordered. S19 and S27 each carry phosphoserine. Phosphothreonine is present on T34. Residues 38–52 (ISPPLGDFRHTMHVG) enclose the CRIB domain. S39 is modified (phosphoserine). The residue at position 53 (R53) is an Omega-N-methylarginine. A phosphoserine mark is found at S65, S77, S101, S113, S121, and S139. The span at 167-189 (PRVEKHSNRDRDRDPDHSQDREQ) shows a compositional bias: basic and acidic residues. Residues 167-203 (PRVEKHSNRDRDRDPDHSQDREQSSFPSEPTPNPELR) are disordered. Phosphoserine is present on residues S191, S205, S207, and S210. 3 repeat units span residues 235–241 (PAAETPV), 242–248 (PTANPPA), and 255–261 (PTAKPPA). Positions 235–284 (PAAETPVPTANPPAPAANPAPTAKPPAHAITTLDAVTSLPASAVTSLPAP) are 3 X 7 AA tandem repeats of [PT]-[AT]-A-[ENT]-[PT]-[PTS]-[AG]. 2 disordered regions span residues 237-260 (AETP…AKPP) and 282-329 (PAPA…FDRH). Positions 243–258 (TANPPAPAANPAPTAK) are enriched in pro residues. Residues 282–291 (PAPAAASSPS) are compositionally biased toward low complexity. Phosphoserine is present on residues S312, S332, S368, and S371.

It belongs to the BORG/CEP family. In terms of assembly, interacts with RHOQ and CDC42, in a GTP-dependent manner.

Its subcellular location is the endomembrane system. The protein resides in the cytoplasm. It is found in the cytoskeleton. In terms of biological role, probably involved in the organization of the actin cytoskeleton. Induced membrane extensions in fibroblasts. The polypeptide is Cdc42 effector protein 1 (Cdc42ep1) (Mus musculus (Mouse)).